Consider the following 267-residue polypeptide: Dihydropteroate synthase (267 aa).

Residues 1-251 (MTKTKIMGIL…NVELNAKLAK (251 aa)) form the Pterin-binding domain. Asparagine 11 is a Mg(2+) binding site. (7,8-dihydropterin-6-yl)methyl diphosphate is bound by residues threonine 51, aspartate 84, asparagine 103, aspartate 167, lysine 203, and 239–241 (RVH).

The protein belongs to the DHPS family. In terms of assembly, homodimer. It depends on Mg(2+) as a cofactor.

The enzyme catalyses (7,8-dihydropterin-6-yl)methyl diphosphate + 4-aminobenzoate = 7,8-dihydropteroate + diphosphate. Its pathway is cofactor biosynthesis; tetrahydrofolate biosynthesis; 7,8-dihydrofolate from 2-amino-4-hydroxy-6-hydroxymethyl-7,8-dihydropteridine diphosphate and 4-aminobenzoate: step 1/2. In terms of biological role, catalyzes the condensation of para-aminobenzoate (pABA) with 6-hydroxymethyl-7,8-dihydropterin diphosphate (DHPt-PP) to form 7,8-dihydropteroate (H2Pte), the immediate precursor of folate derivatives. In Staphylococcus aureus (strain MW2), this protein is Dihydropteroate synthase (folP).